The sequence spans 115 residues: Galanin-like peptide (115 aa).

A signal peptide spans 1 to 23 (MAPSVPLVLLLVLLLSLAETPAS). Positions 86 to 115 (NVMEAFAKPEIGDLDVLSKKIPKEEDVLKS) are excised as a propeptide.

The protein belongs to the galanin family. Hypothalamus and pituitary gland.

The protein localises to the secreted. In terms of biological role, hypothalamic neuropeptide which binds to the G-protein-coupled galanin receptors (GALR1, GALR2 and GALR3). Involved in a large number of putative physiological functions in CNS homeostatic processes, including the regulation of gonadotropin-releasing hormone secretion. Exhibits potent and dose-dependent vasoconstrictor and anti-edema activity in the cutaneous microvasculature, a physiologic effects which does not appear to be mediated via GALR1 or GALR2. Exhibits antimicrobial activity against Gram-negative bacterias, inducing bacterial membrane blebbing. The sequence is that of Galanin-like peptide (GALP) from Macaca nemestrina (Pig-tailed macaque).